A 132-amino-acid polypeptide reads, in one-letter code: Outer membrane protein assembly factor BamE (132 aa).

The first 16 residues, 1 to 16 (MQKLVLTLLVTSLLAG), serve as a signal peptide directing secretion. Cysteine 17 carries the N-palmitoyl cysteine lipid modification. Cysteine 17 is lipidated: S-diacylglycerol cysteine.

It belongs to the BamE family. In terms of assembly, part of the Bam complex.

The protein localises to the cell outer membrane. Functionally, part of the outer membrane protein assembly complex, which is involved in assembly and insertion of beta-barrel proteins into the outer membrane. This chain is Outer membrane protein assembly factor BamE, found in Acinetobacter pittii (strain PHEA-2).